We begin with the raw amino-acid sequence, 258 residues long: Thiazole synthase 2 (258 aa).

Lysine 97 (schiff-base intermediate with DXP) is an active-site residue. 1-deoxy-D-xylulose 5-phosphate-binding positions include glycine 158, 184–185 (AG), and 206–207 (NT).

It belongs to the ThiG family. As to quaternary structure, homotetramer. Forms heterodimers with either ThiH or ThiS.

Its subcellular location is the cytoplasm. The enzyme catalyses [ThiS sulfur-carrier protein]-C-terminal-Gly-aminoethanethioate + 2-iminoacetate + 1-deoxy-D-xylulose 5-phosphate = [ThiS sulfur-carrier protein]-C-terminal Gly-Gly + 2-[(2R,5Z)-2-carboxy-4-methylthiazol-5(2H)-ylidene]ethyl phosphate + 2 H2O + H(+). It functions in the pathway cofactor biosynthesis; thiamine diphosphate biosynthesis. Its function is as follows. Catalyzes the rearrangement of 1-deoxy-D-xylulose 5-phosphate (DXP) to produce the thiazole phosphate moiety of thiamine. Sulfur is provided by the thiocarboxylate moiety of the carrier protein ThiS. In vitro, sulfur can be provided by H(2)S. In Syntrophotalea carbinolica (strain DSM 2380 / NBRC 103641 / GraBd1) (Pelobacter carbinolicus), this protein is Thiazole synthase 2.